A 256-amino-acid chain; its full sequence is Small ribosomal subunit protein uS2 (256 aa).

It belongs to the universal ribosomal protein uS2 family.

The polypeptide is Small ribosomal subunit protein uS2 (Streptococcus equi subsp. equi (strain 4047)).